The sequence spans 58 residues: Large ribosomal subunit protein bL32 (58 aa).

This sequence belongs to the bacterial ribosomal protein bL32 family.

The chain is Large ribosomal subunit protein bL32 from Synechococcus sp. (strain WH7803).